The primary structure comprises 691 residues: Elongation factor G (691 aa).

The region spanning 8–283 (KRVRNIGIAA…AVVAYLPAPD (276 aa)) is the tr-type G domain. GTP contacts are provided by residues 17–24 (AHIDAGKT), 81–85 (DTPGH), and 135–138 (NKMD).

The protein belongs to the TRAFAC class translation factor GTPase superfamily. Classic translation factor GTPase family. EF-G/EF-2 subfamily.

The protein resides in the cytoplasm. Functionally, catalyzes the GTP-dependent ribosomal translocation step during translation elongation. During this step, the ribosome changes from the pre-translocational (PRE) to the post-translocational (POST) state as the newly formed A-site-bound peptidyl-tRNA and P-site-bound deacylated tRNA move to the P and E sites, respectively. Catalyzes the coordinated movement of the two tRNA molecules, the mRNA and conformational changes in the ribosome. The polypeptide is Elongation factor G (Campylobacter lari (strain RM2100 / D67 / ATCC BAA-1060)).